A 122-amino-acid chain; its full sequence is Holo-[acyl-carrier-protein] synthase (122 aa).

2 residues coordinate Mg(2+): Asp-8 and Glu-57.

Belongs to the P-Pant transferase superfamily. AcpS family. Requires Mg(2+) as cofactor.

It localises to the cytoplasm. It catalyses the reaction apo-[ACP] + CoA = holo-[ACP] + adenosine 3',5'-bisphosphate + H(+). In terms of biological role, transfers the 4'-phosphopantetheine moiety from coenzyme A to a Ser of acyl-carrier-protein. This chain is Holo-[acyl-carrier-protein] synthase, found in Protochlamydia amoebophila (strain UWE25).